The sequence spans 490 residues: Aspartyl/glutamyl-tRNA(Asn/Gln) amidotransferase subunit B (490 aa).

This sequence belongs to the GatB/GatE family. GatB subfamily. In terms of assembly, heterotrimer of A, B and C subunits.

It catalyses the reaction L-glutamyl-tRNA(Gln) + L-glutamine + ATP + H2O = L-glutaminyl-tRNA(Gln) + L-glutamate + ADP + phosphate + H(+). It carries out the reaction L-aspartyl-tRNA(Asn) + L-glutamine + ATP + H2O = L-asparaginyl-tRNA(Asn) + L-glutamate + ADP + phosphate + 2 H(+). Allows the formation of correctly charged Asn-tRNA(Asn) or Gln-tRNA(Gln) through the transamidation of misacylated Asp-tRNA(Asn) or Glu-tRNA(Gln) in organisms which lack either or both of asparaginyl-tRNA or glutaminyl-tRNA synthetases. The reaction takes place in the presence of glutamine and ATP through an activated phospho-Asp-tRNA(Asn) or phospho-Glu-tRNA(Gln). In Prochlorococcus marinus (strain MIT 9312), this protein is Aspartyl/glutamyl-tRNA(Asn/Gln) amidotransferase subunit B.